The sequence spans 188 residues: tRNA(Phe) 7-((3-amino-3-carboxypropyl)-4-demethylwyosine(37)-N(4))-methyltransferase (188 aa).

Belongs to the TYW3 family.

It carries out the reaction 4-demethyl-7-[(3S)-3-amino-3-carboxypropyl]wyosine(37) in tRNA(Phe) + S-adenosyl-L-methionine = 7-[(3S)-3-amino-3-carboxypropyl]wyosine(37) in tRNA(Phe) + S-adenosyl-L-homocysteine + H(+). S-adenosyl-L-methionine-dependent methyltransferase that acts as a component of the wyosine derivatives biosynthesis pathway. Probably methylates N-4 position of wybutosine-86 to produce wybutosine-72. The sequence is that of tRNA(Phe) 7-((3-amino-3-carboxypropyl)-4-demethylwyosine(37)-N(4))-methyltransferase from Aeropyrum pernix (strain ATCC 700893 / DSM 11879 / JCM 9820 / NBRC 100138 / K1).